Consider the following 617-residue polypeptide: ATP-dependent rRNA helicase SPB4 (617 aa).

The Q motif motif lies at 7–35 (WADLDYELQPWIKKAINVSGFDSMTPVQA). Positions 38–224 (IPMFAKNKDV…KTGLRNPVKI (187 aa)) constitute a Helicase ATP-binding domain. 51-58 (SVTGSGKT) is an ATP binding site. A DEAD box motif is present at residues 172-175 (DEAD). Positions 252 to 406 (NLIHIMNNIR…ETDINKNKIS (155 aa)) constitute a Helicase C-terminal domain.

It belongs to the DEAD box helicase family. DDX55/SPB4 subfamily. In terms of assembly, component of pre-60S ribosomal complexes.

It is found in the nucleus. It localises to the nucleolus. It carries out the reaction ATP + H2O = ADP + phosphate + H(+). Its function is as follows. ATP-binding RNA helicase involved in the biogenesis of 60S ribosomal subunits. Binds 90S pre-ribosomal particles and dissociates from pre-60S ribosomal particles after processing of 27SB pre-rRNA. Required for the normal formation of 18S rRNA through the processing of pre-rRNAs at sites A0, A1 and A2, and the normal formation of 25S and 5.8S rRNAs through the processing of pre-rRNAs at sites C1 and C2. This chain is ATP-dependent rRNA helicase SPB4, found in Candida glabrata (strain ATCC 2001 / BCRC 20586 / JCM 3761 / NBRC 0622 / NRRL Y-65 / CBS 138) (Yeast).